Consider the following 154-residue polypeptide: ATP synthase subunit b (154 aa).

Residues 9–29 (AIAFVIFVWFCMKYVWPPLMA) form a helical membrane-spanning segment.

It belongs to the ATPase B chain family. In terms of assembly, F-type ATPases have 2 components, F(1) - the catalytic core - and F(0) - the membrane proton channel. F(1) has five subunits: alpha(3), beta(3), gamma(1), delta(1), epsilon(1). F(0) has three main subunits: a(1), b(2) and c(10-14). The alpha and beta chains form an alternating ring which encloses part of the gamma chain. F(1) is attached to F(0) by a central stalk formed by the gamma and epsilon chains, while a peripheral stalk is formed by the delta and b chains.

Its subcellular location is the cell inner membrane. Functionally, f(1)F(0) ATP synthase produces ATP from ADP in the presence of a proton or sodium gradient. F-type ATPases consist of two structural domains, F(1) containing the extramembraneous catalytic core and F(0) containing the membrane proton channel, linked together by a central stalk and a peripheral stalk. During catalysis, ATP synthesis in the catalytic domain of F(1) is coupled via a rotary mechanism of the central stalk subunits to proton translocation. Component of the F(0) channel, it forms part of the peripheral stalk, linking F(1) to F(0). The chain is ATP synthase subunit b from Klebsiella pneumoniae subsp. pneumoniae (strain ATCC 700721 / MGH 78578).